The primary structure comprises 390 residues: Galactokinase (390 aa).

33–36 (EHTD) serves as a coordination point for substrate. ATP contacts are provided by residues Ser-67 and 124–130 (GSGLSSS). Mg(2+) is bound by residues Ser-130 and Glu-162. Asp-174 serves as the catalytic Proton acceptor. Tyr-224 contacts substrate.

Belongs to the GHMP kinase family. GalK subfamily.

The protein resides in the cytoplasm. It catalyses the reaction alpha-D-galactose + ATP = alpha-D-galactose 1-phosphate + ADP + H(+). The protein operates within carbohydrate metabolism; galactose metabolism. In terms of biological role, catalyzes the transfer of the gamma-phosphate of ATP to D-galactose to form alpha-D-galactose-1-phosphate (Gal-1-P). The protein is Galactokinase of Streptococcus mutans serotype c (strain ATCC 700610 / UA159).